Reading from the N-terminus, the 346-residue chain is MHLPGCAPAMADGSFSLAGHLLRSPGGSTSRLHSIEAILGFTKDDGILGTFPAERGARGAKERDRRLGARPACPKAPEEGSEPSPPPAPAPAPEYEAPRPYCPKEPGEARPSPGLPVGPATGEAKLSEEEQPKKKHRRNRTTFTTYQLHELERAFEKSHYPDVYSREELAGKVNLPEVRVQVWFQNRRAKWRRQEKLEVSSMKLQDSPLLSFSRSPPSATLSPLGAGPGSGGGPAGGALPLESWLGPPLPGGGATALQSLPGFGPPAQSLPASYTPPPPPPPFLNSPPLGPGLQPLAPPPPSYPCGPGFGDKFPLDEADPRNSSIAALRLKAKEHIQAIGKPWQAL.

The Octapeptide motif signature appears at 33 to 40 (HSIEAILG). 2 disordered regions span residues 46-145 (GILG…TFTT) and 194-318 (QEKL…LDEA). Residues 55-67 (RGARGAKERDRRL) show a composition bias toward basic and acidic residues. A compositionally biased stretch (pro residues) spans 83-92 (PSPPPAPAPA). Residues 136 to 195 (HRRNRTTFTTYQLHELERAFEKSHYPDVYSREELAGKVNLPEVRVQVWFQNRRAKWRRQE) constitute a DNA-binding region (homeobox). A compositionally biased stretch (low complexity) spans 207-225 (SPLLSFSRSPPSATLSPLG). Over residues 226-236 (AGPGSGGGPAG) the composition is skewed to gly residues. Positions 237 to 246 (GALPLESWLG) are enriched in low complexity. Residues 274–304 (YTPPPPPPPFLNSPPLGPGLQPLAPPPPSYP) show a composition bias toward pro residues. An OAR motif is present at residues 323–336 (SSIAALRLKAKEHI). The Nuclear localization signal motif lies at 329-333 (RLKAK).

The protein belongs to the paired homeobox family. Bicoid subfamily. In terms of tissue distribution, expressed in the developing eye and weakly expressed in the adult retina.

It is found in the nucleus. Plays a critical role in eye formation by regulating the initial specification of retinal cells and/or their subsequent proliferation. Binds to the photoreceptor conserved element-I (PCE-1/Ret 1) in the photoreceptor cell-specific arrestin promoter. The sequence is that of Retinal homeobox protein Rx (RAX) from Homo sapiens (Human).